A 267-amino-acid chain; its full sequence is Thymidylate synthase (267 aa).

Residue R25 participates in dUMP binding. Residue H55 coordinates (6R)-5,10-methylene-5,6,7,8-tetrahydrofolate. 130 to 131 (RR) contacts dUMP. C150 acts as the Nucleophile in catalysis. Residues 170 to 173 (RSAD), N181, and 211 to 213 (HIY) each bind dUMP. A (6R)-5,10-methylene-5,6,7,8-tetrahydrofolate-binding site is contributed by D173. (6R)-5,10-methylene-5,6,7,8-tetrahydrofolate is bound at residue A266.

This sequence belongs to the thymidylate synthase family. Bacterial-type ThyA subfamily. In terms of assembly, homodimer.

It is found in the cytoplasm. The enzyme catalyses dUMP + (6R)-5,10-methylene-5,6,7,8-tetrahydrofolate = 7,8-dihydrofolate + dTMP. The protein operates within pyrimidine metabolism; dTTP biosynthesis. Catalyzes the reductive methylation of 2'-deoxyuridine-5'-monophosphate (dUMP) to 2'-deoxythymidine-5'-monophosphate (dTMP) while utilizing 5,10-methylenetetrahydrofolate (mTHF) as the methyl donor and reductant in the reaction, yielding dihydrofolate (DHF) as a by-product. This enzymatic reaction provides an intracellular de novo source of dTMP, an essential precursor for DNA biosynthesis. The sequence is that of Thymidylate synthase from Corynebacterium efficiens (strain DSM 44549 / YS-314 / AJ 12310 / JCM 11189 / NBRC 100395).